Here is a 203-residue protein sequence, read N- to C-terminus: Cutinase pbc1 (203 aa).

Residues 1–18 (MKVTALGNTLTGFGQALA) form the signal peptide. C32 and C107 are joined by a disulfide. S118 (nucleophile) is an active-site residue. C166 and C173 are oxidised to a cystine. H170 is an active-site residue. The Proton donor/acceptor role is filled by H183.

The protein belongs to the cutinase family. In terms of processing, the 2 disulfide bonds play a critical role in holding the catalytic residues in juxta-position; reduction of the disulfide bridges results in the complete inactivation of the enzyme.

It is found in the secreted. The enzyme catalyses cutin + H2O = cutin monomers.. Functionally, catalyzes the hydrolysis of complex carboxylic polyesters found in the cell wall of plants. Degrades cutin, a macromolecule that forms the structure of the plant cuticle. Allows pathogenic fungi to penetrate through the cuticular barrier into the host plant during the initial stage of fungal infection. The polypeptide is Cutinase pbc1 (Pyrenopeziza brassicae).